A 518-amino-acid chain; its full sequence is Membrane-bound lytic murein transglycosylase F (518 aa).

The signal sequence occupies residues 1 to 21 (MKKLKINYLFIGILALLLAVA). The tract at residues 22–269 (LWPSIPWFGK…RIEEKYLGHG (248 aa)) is non-LT domain. The interval 270-518 (DDFDYVDTRT…SRKGSEEKQN (249 aa)) is LT domain. The active site involves Glu314.

It in the N-terminal section; belongs to the bacterial solute-binding protein 3 family. The protein in the C-terminal section; belongs to the transglycosylase Slt family.

Its subcellular location is the cell outer membrane. The enzyme catalyses Exolytic cleavage of the (1-&gt;4)-beta-glycosidic linkage between N-acetylmuramic acid (MurNAc) and N-acetylglucosamine (GlcNAc) residues in peptidoglycan, from either the reducing or the non-reducing ends of the peptidoglycan chains, with concomitant formation of a 1,6-anhydrobond in the MurNAc residue.. Its function is as follows. Murein-degrading enzyme that degrades murein glycan strands and insoluble, high-molecular weight murein sacculi, with the concomitant formation of a 1,6-anhydromuramoyl product. Lytic transglycosylases (LTs) play an integral role in the metabolism of the peptidoglycan (PG) sacculus. Their lytic action creates space within the PG sacculus to allow for its expansion as well as for the insertion of various structures such as secretion systems and flagella. This Escherichia coli O157:H7 protein is Membrane-bound lytic murein transglycosylase F.